The primary structure comprises 848 residues: Trimethylamine-N-oxide reductase 1 (848 aa).

Positions 1–39 (MNNNDLFQASRRRFLAQLGGLTVAGMLGPSLLTSRRATA) form a signal peptide, tat-type signal. Ser191 contacts Mo-bis(molybdopterin guanine dinucleotide).

It belongs to the prokaryotic molybdopterin-containing oxidoreductase family. In terms of assembly, interacts with the N-terminal domain of TorC. Mo-bis(molybdopterin guanine dinucleotide) serves as cofactor. In terms of processing, predicted to be exported by the Tat system. The position of the signal peptide cleavage has not been experimentally proven.

Its subcellular location is the periplasm. It catalyses the reaction trimethylamine + 2 Fe(III)-[cytochrome c] + H2O = trimethylamine N-oxide + 2 Fe(II)-[cytochrome c] + 3 H(+). Its function is as follows. Reduces trimethylamine-N-oxide (TMAO) into trimethylamine; an anaerobic reaction coupled to energy-yielding reactions. This Escherichia coli O157:H7 protein is Trimethylamine-N-oxide reductase 1 (torA).